The chain runs to 301 residues: HPr kinase/phosphorylase (301 aa).

Residues His-134 and Lys-155 contribute to the active site. Position 149 to 156 (149 to 156 (GKSGLGKS)) interacts with ATP. Ser-156 provides a ligand contact to Mg(2+). Asp-173 functions as the Proton acceptor; for phosphorylation activity. Proton donor; for dephosphorylation activity in the catalytic mechanism. Residues 196–205 (LEVRGLGIIN) form an important for the catalytic mechanism of both phosphorylation and dephosphorylation region. Mg(2+) is bound at residue Glu-197. The active site involves Arg-239. Residues 260–265 (PITPGK) form an important for the catalytic mechanism of dephosphorylation region.

The protein belongs to the HPrK/P family. In terms of assembly, homohexamer. It depends on Mg(2+) as a cofactor.

It catalyses the reaction [HPr protein]-L-serine + ATP = [HPr protein]-O-phospho-L-serine + ADP + H(+). The catalysed reaction is [HPr protein]-O-phospho-L-serine + phosphate + H(+) = [HPr protein]-L-serine + diphosphate. Functionally, catalyzes the ATP- as well as the pyrophosphate-dependent phosphorylation of a specific serine residue in HPr, a phosphocarrier protein of the phosphoenolpyruvate-dependent sugar phosphotransferase system (PTS). HprK/P also catalyzes the pyrophosphate-producing, inorganic phosphate-dependent dephosphorylation (phosphorolysis) of seryl-phosphorylated HPr (P-Ser-HPr). The two antagonistic activities of HprK/P are regulated by several intracellular metabolites, which change their concentration in response to the absence or presence of rapidly metabolisable carbon sources (glucose, fructose, etc.) in the growth medium. Therefore, by controlling the phosphorylation state of HPr, HPrK/P is a sensor enzyme that plays a major role in the regulation of carbon metabolism and sugar transport: it mediates carbon catabolite repression (CCR), and regulates PTS-catalyzed carbohydrate uptake and inducer exclusion. This chain is HPr kinase/phosphorylase, found in Malacoplasma penetrans (strain HF-2) (Mycoplasma penetrans).